The sequence spans 386 residues: 2,3,4,5-tetrahydropyridine-2,6-dicarboxylate N-succinyltransferase (386 aa).

The active-site Acyl-anhydride intermediate is the Glu257. Residues Arg259, Gly274, Ser277, Ala300, 315 to 316 (DA), Gly323, Lys349, and 362 to 365 (RQDS) each bind succinyl-CoA.

Belongs to the type 2 tetrahydrodipicolinate N-succinyltransferase family. In terms of assembly, homotrimer.

The protein localises to the cytoplasm. It catalyses the reaction (S)-2,3,4,5-tetrahydrodipicolinate + succinyl-CoA + H2O = (S)-2-succinylamino-6-oxoheptanedioate + CoA. The protein operates within amino-acid biosynthesis; L-lysine biosynthesis via DAP pathway; LL-2,6-diaminopimelate from (S)-tetrahydrodipicolinate (succinylase route): step 1/3. Catalyzes the conversion of the cyclic tetrahydrodipicolinate (THDP) into the acyclic N-succinyl-L-2-amino-6-oxopimelate using succinyl-CoA. The polypeptide is 2,3,4,5-tetrahydropyridine-2,6-dicarboxylate N-succinyltransferase (Campylobacter jejuni subsp. jejuni serotype O:2 (strain ATCC 700819 / NCTC 11168)).